The chain runs to 157 residues: Ribosome maturation factor RimP (157 aa).

The protein belongs to the RimP family.

The protein resides in the cytoplasm. In terms of biological role, required for maturation of 30S ribosomal subunits. The protein is Ribosome maturation factor RimP of Lactococcus lactis subsp. lactis (strain IL1403) (Streptococcus lactis).